A 116-amino-acid polypeptide reads, in one-letter code: Large ribosomal subunit protein bL17 (116 aa).

Belongs to the bacterial ribosomal protein bL17 family. In terms of assembly, part of the 50S ribosomal subunit. Contacts protein L32.

This Prochlorococcus marinus (strain MIT 9301) protein is Large ribosomal subunit protein bL17.